The chain runs to 74 residues: Putative Fe(2+) transport protein A (74 aa).

This sequence belongs to the FeoA family.

Functionally, might be involved in Fe(2+) ion uptake. The sequence is that of Putative Fe(2+) transport protein A from Campylobacter jejuni subsp. jejuni serotype O:2 (strain ATCC 700819 / NCTC 11168).